Consider the following 305-residue polypeptide: Spore coat protein CotA (305 aa).

It localises to the spore coat. The protein localises to the spore. It is found in the perispore. Functionally, contributes to maintain proper thickness of the spore coat. May contribute to the formation of polar appendages. May play an important role in assembly of the outer layers of the spore coat. This Clostridioides difficile (strain 630) (Peptoclostridium difficile) protein is Spore coat protein CotA.